A 620-amino-acid polypeptide reads, in one-letter code: Cilia- and flagella-associated protein 52 (620 aa).

11 WD repeats span residues 62–106 (GHGN…LIAR), 109–150 (LHKG…AICG), 156–195 (LNVG…RKIW), 288–327 (QLQG…ETLI), 330–369 (CHFE…ELLR), 372–411 (VPNM…LMYT), 415–454 (AHRI…QKLE), 459–498 (EHKS…RNQM), 500–541 (LANT…RELE), 543–582 (SLSG…VTHV), and 585–620 (GHSG…PFAS).

Belongs to the CFAP52 family. As to quaternary structure, microtubule inner protein component of sperm flagellar doublet microtubules. Interacts with BRCA2. Interacts with the CCT chaperonin complex. Interacts with HSP70. Interacts with AK8. Interacts with CFAP45. Interacts with DNAI1. Interacts with IQDC.

Its subcellular location is the cytoplasm. It is found in the cytoskeleton. It localises to the cilium axoneme. The protein resides in the flagellum axoneme. Its function is as follows. Microtubule inner protein (MIP) part of the dynein-decorated doublet microtubules (DMTs) in cilia axoneme. Important for proper ciliary and flagellar beating. May act in cooperation with CFAP45 and axonemal dynein subunit DNAH11. May play a role in cell growth and/or survival. In Mus musculus (Mouse), this protein is Cilia- and flagella-associated protein 52.